The sequence spans 256 residues: uncharacterized protein (256 aa).

The first 22 residues, 1-22 (MGYLKRIGMCISLLIVIIFVTS), serve as a signal peptide directing secretion. Cys23 carries N-palmitoyl cysteine lipidation. The S-diacylglycerol cysteine moiety is linked to residue Cys23.

Belongs to the staphylococcal tandem lipoprotein family.

It localises to the cell membrane. This is an uncharacterized protein from Staphylococcus aureus (strain MSSA476).